We begin with the raw amino-acid sequence, 430 residues long: Adenylosuccinate synthetase (430 aa).

GTP contacts are provided by residues 13 to 19 and 41 to 43; these read GDEGKGK and GHT. Catalysis depends on Asp-14, which acts as the Proton acceptor. Residues Asp-14 and Gly-41 each coordinate Mg(2+). IMP contacts are provided by residues 14–17, 39–42, Thr-130, Arg-144, Gln-225, Thr-240, and Arg-304; these read DEGK and NAGH. His-42 functions as the Proton donor in the catalytic mechanism. Position 300-306 (300-306) interacts with substrate; sequence ATTGRAR. Residues Arg-306, 332-334, and 414-416 contribute to the GTP site; these read KLD and STG.

The protein belongs to the adenylosuccinate synthetase family. In terms of assembly, homodimer. It depends on Mg(2+) as a cofactor.

The protein localises to the cytoplasm. It catalyses the reaction IMP + L-aspartate + GTP = N(6)-(1,2-dicarboxyethyl)-AMP + GDP + phosphate + 2 H(+). The protein operates within purine metabolism; AMP biosynthesis via de novo pathway; AMP from IMP: step 1/2. Its function is as follows. Plays an important role in the de novo pathway of purine nucleotide biosynthesis. Catalyzes the first committed step in the biosynthesis of AMP from IMP. In Pseudomonas fluorescens (strain ATCC BAA-477 / NRRL B-23932 / Pf-5), this protein is Adenylosuccinate synthetase.